A 362-amino-acid polypeptide reads, in one-letter code: Probable dual-specificity RNA methyltransferase RlmN (362 aa).

Glu-105 functions as the Proton acceptor in the catalytic mechanism. The Radical SAM core domain maps to 111-344 (HEYGNSICVT…VTIRREQGHD (234 aa)). Cys-118 and Cys-349 are oxidised to a cystine. Positions 125, 129, and 132 each coordinate [4Fe-4S] cluster. S-adenosyl-L-methionine contacts are provided by residues 175–176 (GE), Ser-207, 230–232 (SLH), and Asn-306. Residue Cys-349 is the S-methylcysteine intermediate of the active site.

It belongs to the radical SAM superfamily. RlmN family. Requires [4Fe-4S] cluster as cofactor.

It is found in the cytoplasm. It carries out the reaction adenosine(2503) in 23S rRNA + 2 reduced [2Fe-2S]-[ferredoxin] + 2 S-adenosyl-L-methionine = 2-methyladenosine(2503) in 23S rRNA + 5'-deoxyadenosine + L-methionine + 2 oxidized [2Fe-2S]-[ferredoxin] + S-adenosyl-L-homocysteine. The enzyme catalyses adenosine(37) in tRNA + 2 reduced [2Fe-2S]-[ferredoxin] + 2 S-adenosyl-L-methionine = 2-methyladenosine(37) in tRNA + 5'-deoxyadenosine + L-methionine + 2 oxidized [2Fe-2S]-[ferredoxin] + S-adenosyl-L-homocysteine. Specifically methylates position 2 of adenine 2503 in 23S rRNA and position 2 of adenine 37 in tRNAs. This Bacillus thuringiensis subsp. konkukian (strain 97-27) protein is Probable dual-specificity RNA methyltransferase RlmN.